The following is a 187-amino-acid chain: MNLQHHFLIAMPTLTDPLFKQSVVYICTHNHEGAMGIVINKPVEQFTVASVLHKLKIIPIVDHASVQLNQPVFLGGPLADDRGFIIHTPKDGFGASIGISPQTMITTSKDVLETLGTHNQPDDILVALGYSGWEEGQLEHELRANTWLTIPANNQILFATPVSARWQAAAKILGININNIVNQIGHA.

It belongs to the UPF0301 (AlgH) family.

The polypeptide is UPF0301 protein BCI_0481 (Baumannia cicadellinicola subsp. Homalodisca coagulata).